The primary structure comprises 106 residues: ATP-dependent Clp protease adapter protein ClpS (106 aa).

It belongs to the ClpS family. Binds to the N-terminal domain of the chaperone ClpA.

Its function is as follows. Involved in the modulation of the specificity of the ClpAP-mediated ATP-dependent protein degradation. The chain is ATP-dependent Clp protease adapter protein ClpS from Yersinia pestis bv. Antiqua (strain Antiqua).